Reading from the N-terminus, the 361-residue chain is U7 snRNA-associated Sm-like protein LSm11 (361 aa).

The disordered stretch occupies residues 1 to 26 (MEEREWGARSARAGSPASPPSPRLDV). Phosphoserine is present on residues S15 and S21. Position 41 is an omega-N-methylarginine (R41). Positions 67–142 (RTGRGRARGT…QGPGRSKKAP (76 aa)) are disordered. Positions 76–96 (TGEPASAGTSTGTSTGAGSSS) are enriched in low complexity. K121 is covalently cross-linked (Glycyl lysine isopeptide (Lys-Gly) (interchain with G-Cter in SUMO2)). S155 bears the Phosphoserine mark. The Sm domain maps to 155–230 (SPLGELHRCI…LTLTRLFDRL (76 aa)). Residues 172-205 (VHIRTFKGLRGVCTGFLVAFDKFWNMALTDVDET) form an SM 1 region. Residues 268 to 335 (RGDTDRSSHR…RKKKRKPKVD (68 aa)) are disordered. The residue at position 281 (S281) is a Phosphoserine. The span at 307–323 (GSSVGGTFSRATTLSRG) shows a compositional bias: polar residues. The tract at residues 344 to 357 (INQIFIRGENVLLV) is SM 2.

Belongs to the snRNP Sm proteins family. As to quaternary structure, component of the heptameric ring U7 snRNP complex, or U7 Sm protein core complex, at least composed of LSM10, LSM11, SNRPB, SNRPD3, SNRPE, SNRPF, SNRPG and U7 snRNA. Formation of the U7 snRNP is an ATP-dependent process mediated by a specialized SMN complex containing at least the Sm protein core complex and additionally, the U7-specific LSM10 and LSM11 proteins. Identified in a histone pre-mRNA complex, at least composed of ERI1, LSM11, SLBP, SNRPB, SYNCRIP and YBX1. Interacts (via the Sm domains) with CLNS1A. Interacts with PRMT5, SMN, ZNF473 and WDR77. In terms of processing, not methylated.

It is found in the nucleus. Its function is as follows. Component of the U7 snRNP complex that is involved in the histone 3'-end pre-mRNA processing. Increases U7 snRNA levels but not histone 3'-end pre-mRNA processing activity, when overexpressed. Required for cell cycle progression from G1 to S phases. Binds specifically to the Sm-binding site of U7 snRNA. This Mus musculus (Mouse) protein is U7 snRNA-associated Sm-like protein LSm11.